A 513-amino-acid polypeptide reads, in one-letter code: uncharacterized protein (513 aa).

Disordered stretches follow at residues G72 to F113 and I155 to F262. Residues A82–T106 show a composition bias toward low complexity. Composition is skewed to polar residues over residues E164–G189 and T210–Q228. Residues T229 to S238 show a composition bias toward low complexity. Positions T239 to S248 are enriched in pro residues. Polar residues predominate over residues G253–F262. Residues C396–R437 form an RING-type; atypical zinc finger. Positions P439–E513 are disordered. Residues P442 to S493 are compositionally biased toward polar residues.

This is an uncharacterized protein from Schizosaccharomyces pombe (strain 972 / ATCC 24843) (Fission yeast).